The sequence spans 123 residues: MPTINQLIRKERKKQVKKSKSPALVKCPQRRGVCTRVYTTTPKKPNSALRKVAKVRLTSGFEVISYIGGEGHNLQEHSIVLVRGGRIKDLPGVKYHIVRGALDASGVTGRTVARSKYGTKKPK.

A disordered region spans residues 1–24 (MPTINQLIRKERKKQVKKSKSPAL). A compositionally biased stretch (basic residues) spans 10–20 (KERKKQVKKSK). 3-methylthioaspartic acid is present on aspartate 89.

The protein belongs to the universal ribosomal protein uS12 family. As to quaternary structure, part of the 30S ribosomal subunit. Contacts proteins S8 and S17. May interact with IF1 in the 30S initiation complex.

Functionally, with S4 and S5 plays an important role in translational accuracy. Its function is as follows. Interacts with and stabilizes bases of the 16S rRNA that are involved in tRNA selection in the A site and with the mRNA backbone. Located at the interface of the 30S and 50S subunits, it traverses the body of the 30S subunit contacting proteins on the other side and probably holding the rRNA structure together. The combined cluster of proteins S8, S12 and S17 appears to hold together the shoulder and platform of the 30S subunit. This Sulfurovum sp. (strain NBC37-1) protein is Small ribosomal subunit protein uS12.